The sequence spans 94 residues: Myosuppressin (94 aa).

Residues 1–24 form the signal peptide; sequence MMSPTLMILISITTMAILSGESFG. The propeptide occupies 25–80; that stretch reads AMPAQCNSEFLEELPPRLRKICVAIARIWDAREMNDFVDDREYRENLPRYDSSVKR. Glutamine 81 bears the Pyrrolidone carboxylic acid mark. Phenylalanine 90 carries the post-translational modification Phenylalanine amide.

Expressed throughout the nervous system (at protein level).

It localises to the secreted. In terms of biological role, myoinhibiting neuropeptide. The polypeptide is Myosuppressin (Camponotus floridanus (Florida carpenter ant)).